We begin with the raw amino-acid sequence, 383 residues long: E3 ubiquitin-protein ligase SPL2 (383 aa).

Topologically, residues 1-14 are cytoplasmic; sequence MSSPERALLNLLTD. The chain crosses the membrane as a helical span at residues 15–35; sequence IALSFDGAILGLTLAVSAVGS. Residues 36 to 269 are Chloroplast intermembrane-facing; it reads ALKYASTNAA…MIEDLMEQTN (234 aa). A helical membrane pass occupies residues 270 to 290; the sequence is FIFLGSVILGIVSVGILSYAA. At 291–383 the chain is on the cytoplasmic side; that stretch reads VRTWNKWKQW…IRGSMRVYYS (93 aa). The RING-type zinc-finger motif lies at 331–370; sequence CVICVSRRRVPAFIPCGHVVCCRRCASTVERELNPKCPVC.

The protein resides in the plastid. It is found in the chloroplast outer membrane. The catalysed reaction is S-ubiquitinyl-[E2 ubiquitin-conjugating enzyme]-L-cysteine + [acceptor protein]-L-lysine = [E2 ubiquitin-conjugating enzyme]-L-cysteine + N(6)-ubiquitinyl-[acceptor protein]-L-lysine.. It participates in protein modification; protein ubiquitination. In terms of biological role, possesses E3 ubiquitin-protein ligase activity. In Arabidopsis thaliana (Mouse-ear cress), this protein is E3 ubiquitin-protein ligase SPL2.